The sequence spans 351 residues: Cell cycle control protein 50B (351 aa).

Over 1–33 the chain is Cytoplasmic; it reads MTWSATARGAHQPDNTAFTQQRLPAWQPLLSAS. The chain crosses the membrane as a helical span at residues 34 to 54; it reads IALPLFFCAGLAFIGLGLGLY. The Exoplasmic loop portion of the chain corresponds to 55–315; that stretch reads YSSNGIKELE…SISWMGGKNP (261 aa). Asn-75, Asn-213, and Asn-286 each carry an N-linked (GlcNAc...) asparagine glycan. The helical transmembrane segment at 316 to 336 threads the bilayer; that stretch reads FLGIAYLVVGSLCILTGFVML. Residues 337–351 are Cytoplasmic-facing; the sequence is VVYIRYQDQDDDDEE.

This sequence belongs to the CDC50/LEM3 family. As to quaternary structure, component of a P4-ATPase flippase complex which consists of a catalytic alpha subunit and an accessory beta subunit. Interacts with alpha subunits ATP8A1, ATP8B1, ATP8B2 and ATP8B4.

It localises to the cell membrane. Accessory component of a P4-ATPase flippase complex which catalyzes the hydrolysis of ATP coupled to the transport of aminophospholipids from the outer to the inner leaflet of various membranes and ensures the maintenance of asymmetric distribution of phospholipids. Phospholipid translocation also seems to be implicated in vesicle formation and in uptake of lipid signaling molecules. The beta subunit may assist in binding of the phospholipid substrate. Can mediate the export of alpha subunits ATP8A1, ATP8B1, ATP8B2 and ATP8B4 from the ER to the plasma membrane. The protein is Cell cycle control protein 50B (TMEM30B) of Homo sapiens (Human).